The following is a 342-amino-acid chain: UDP-N-acetylglucosamine--N-acetylmuramyl-(pentapeptide) pyrophosphoryl-undecaprenol N-acetylglucosamine transferase (342 aa).

UDP-N-acetyl-alpha-D-glucosamine contacts are provided by residues 10 to 12, Asn-124, Ser-177, and Gln-275; that span reads TGG.

Belongs to the glycosyltransferase 28 family. MurG subfamily.

The protein localises to the cell inner membrane. The enzyme catalyses di-trans,octa-cis-undecaprenyl diphospho-N-acetyl-alpha-D-muramoyl-L-alanyl-D-glutamyl-meso-2,6-diaminopimeloyl-D-alanyl-D-alanine + UDP-N-acetyl-alpha-D-glucosamine = di-trans,octa-cis-undecaprenyl diphospho-[N-acetyl-alpha-D-glucosaminyl-(1-&gt;4)]-N-acetyl-alpha-D-muramoyl-L-alanyl-D-glutamyl-meso-2,6-diaminopimeloyl-D-alanyl-D-alanine + UDP + H(+). It functions in the pathway cell wall biogenesis; peptidoglycan biosynthesis. In terms of biological role, cell wall formation. Catalyzes the transfer of a GlcNAc subunit on undecaprenyl-pyrophosphoryl-MurNAc-pentapeptide (lipid intermediate I) to form undecaprenyl-pyrophosphoryl-MurNAc-(pentapeptide)GlcNAc (lipid intermediate II). In Campylobacter jejuni subsp. doylei (strain ATCC BAA-1458 / RM4099 / 269.97), this protein is UDP-N-acetylglucosamine--N-acetylmuramyl-(pentapeptide) pyrophosphoryl-undecaprenol N-acetylglucosamine transferase.